A 265-amino-acid polypeptide reads, in one-letter code: Thiazole synthase (265 aa).

The active-site Schiff-base intermediate with DXP is Lys107. 1-deoxy-D-xylulose 5-phosphate contacts are provided by residues Gly168, 194-195 (AG), and 216-217 (NT).

Belongs to the ThiG family. In terms of assembly, homotetramer. Forms heterodimers with either ThiH or ThiS.

It localises to the cytoplasm. It catalyses the reaction [ThiS sulfur-carrier protein]-C-terminal-Gly-aminoethanethioate + 2-iminoacetate + 1-deoxy-D-xylulose 5-phosphate = [ThiS sulfur-carrier protein]-C-terminal Gly-Gly + 2-[(2R,5Z)-2-carboxy-4-methylthiazol-5(2H)-ylidene]ethyl phosphate + 2 H2O + H(+). It participates in cofactor biosynthesis; thiamine diphosphate biosynthesis. Its function is as follows. Catalyzes the rearrangement of 1-deoxy-D-xylulose 5-phosphate (DXP) to produce the thiazole phosphate moiety of thiamine. Sulfur is provided by the thiocarboxylate moiety of the carrier protein ThiS. In vitro, sulfur can be provided by H(2)S. The polypeptide is Thiazole synthase (Pseudomonas aeruginosa (strain LESB58)).